The following is a 322-amino-acid chain: Undecaprenyl-phosphate 4-deoxy-4-formamido-L-arabinose transferase (322 aa).

At 1-235 (MFEIHPVKKV…TCLTTTPLRM (235 aa)) the chain is on the cytoplasmic side. Residues 236-256 (LSLLGSIIAIGGFSIAVLLVI) traverse the membrane as a helical segment. Residues 257–269 (LRLTFGPQWAAEG) lie on the Periplasmic side of the membrane. A helical membrane pass occupies residues 270–290 (VFMLFAVLFTFIGAQFIGMGL). Topologically, residues 291 to 322 (LGEYIGRIYTDVRARPRYFVQQVIRPSSKENE) are cytoplasmic.

The protein belongs to the glycosyltransferase 2 family.

It is found in the cell inner membrane. It carries out the reaction UDP-4-deoxy-4-formamido-beta-L-arabinose + di-trans,octa-cis-undecaprenyl phosphate = 4-deoxy-4-formamido-alpha-L-arabinopyranosyl di-trans,octa-cis-undecaprenyl phosphate + UDP. The protein operates within glycolipid biosynthesis; 4-amino-4-deoxy-alpha-L-arabinose undecaprenyl phosphate biosynthesis; 4-amino-4-deoxy-alpha-L-arabinose undecaprenyl phosphate from UDP-4-deoxy-4-formamido-beta-L-arabinose and undecaprenyl phosphate: step 1/2. Its pathway is bacterial outer membrane biogenesis; lipopolysaccharide biosynthesis. Catalyzes the transfer of 4-deoxy-4-formamido-L-arabinose from UDP to undecaprenyl phosphate. The modified arabinose is attached to lipid A and is required for resistance to polymyxin and cationic antimicrobial peptides. The sequence is that of Undecaprenyl-phosphate 4-deoxy-4-formamido-L-arabinose transferase from Shigella flexneri serotype 5b (strain 8401).